Reading from the N-terminus, the 451-residue chain is Tubulin alpha-2 chain (451 aa).

Positions 12, 73, 142, 146, 147, 181, 208, and 230 each coordinate GTP. Mg(2+) is bound at residue Asp73. Glu256 is an active-site residue.

This sequence belongs to the tubulin family. In terms of assembly, dimer of alpha and beta chains. A typical microtubule is a hollow water-filled tube with an outer diameter of 25 nm and an inner diameter of 15 nM. Alpha-beta heterodimers associate head-to-tail to form protofilaments running lengthwise along the microtubule wall with the beta-tubulin subunit facing the microtubule plus end conferring a structural polarity. Microtubules usually have 13 protofilaments but different protofilament numbers can be found in some organisms and specialized cells. Mg(2+) serves as cofactor.

It localises to the cytoplasm. The protein localises to the cytoskeleton. The catalysed reaction is GTP + H2O = GDP + phosphate + H(+). Functionally, tubulin is the major constituent of microtubules, a cylinder consisting of laterally associated linear protofilaments composed of alpha- and beta-tubulin heterodimers. Microtubules grow by the addition of GTP-tubulin dimers to the microtubule end, where a stabilizing cap forms. Below the cap, tubulin dimers are in GDP-bound state, owing to GTPase activity of alpha-tubulin. The polypeptide is Tubulin alpha-2 chain (tubB) (Emericella nidulans (strain FGSC A4 / ATCC 38163 / CBS 112.46 / NRRL 194 / M139) (Aspergillus nidulans)).